A 327-amino-acid chain; its full sequence is MTSAEKQLQPLFPHRHLLGIEGLSPTDITSLLDLADTYVEQNRQVDKKGSVLRGRTQINLFFEASTRTQSSFELAGKRLGADVMNMSVSSSSVKKGETLIDTAVTLNAMHPDLIIIRHQNSGAVELLAQKVSCSVINAGDGAHEHPTQALLDALTIRRRKGRLQGLIVAICGDILHSRVARSNILLLNAMGARVRVVAPPTLLPAGIERLGVEVFHDMAKGLEGVDIVMMLRLQLERMAGSYVPSQREYFHFYGLDYAKLAHAKPDALVMHPGPMNRGVEIDSAVADDIDRSLIREQVEMGVAVRMAVLDALSRNLPNELPLAGGRS.

The carbamoyl phosphate site is built by Arg-67 and Thr-68. Residue Lys-95 coordinates L-aspartate. Arg-117, His-145, and Gln-148 together coordinate carbamoyl phosphate. L-aspartate-binding residues include Arg-178 and Arg-232. 2 residues coordinate carbamoyl phosphate: Gly-273 and Pro-274.

Belongs to the aspartate/ornithine carbamoyltransferase superfamily. ATCase family. Heterododecamer (2C3:3R2) of six catalytic PyrB chains organized as two trimers (C3), and six regulatory PyrI chains organized as three dimers (R2).

The enzyme catalyses carbamoyl phosphate + L-aspartate = N-carbamoyl-L-aspartate + phosphate + H(+). It functions in the pathway pyrimidine metabolism; UMP biosynthesis via de novo pathway; (S)-dihydroorotate from bicarbonate: step 2/3. In terms of biological role, catalyzes the condensation of carbamoyl phosphate and aspartate to form carbamoyl aspartate and inorganic phosphate, the committed step in the de novo pyrimidine nucleotide biosynthesis pathway. In Parvibaculum lavamentivorans (strain DS-1 / DSM 13023 / NCIMB 13966), this protein is Aspartate carbamoyltransferase catalytic subunit.